The chain runs to 103 residues: UPF0235 protein Dole_0289 (103 aa).

Belongs to the UPF0235 family.

This chain is UPF0235 protein Dole_0289, found in Desulfosudis oleivorans (strain DSM 6200 / JCM 39069 / Hxd3) (Desulfococcus oleovorans).